A 530-amino-acid polypeptide reads, in one-letter code: 2,3-bisphosphoglycerate-independent phosphoglycerate mutase (530 aa).

Aspartate 15 and serine 65 together coordinate Mn(2+). Serine 65 functions as the Phosphoserine intermediate in the catalytic mechanism. Residues histidine 126, 155–156 (RD), arginine 187, arginine 193, 257–260 (RPDR), and lysine 330 each bind substrate. Residues aspartate 397, histidine 401, aspartate 438, histidine 439, and histidine 456 each coordinate Mn(2+).

The protein belongs to the BPG-independent phosphoglycerate mutase family. As to quaternary structure, monomer. Mn(2+) is required as a cofactor.

The catalysed reaction is (2R)-2-phosphoglycerate = (2R)-3-phosphoglycerate. It functions in the pathway carbohydrate degradation; glycolysis; pyruvate from D-glyceraldehyde 3-phosphate: step 3/5. In terms of biological role, catalyzes the interconversion of 2-phosphoglycerate and 3-phosphoglycerate. The sequence is that of 2,3-bisphosphoglycerate-independent phosphoglycerate mutase from Synechococcus sp. (strain JA-3-3Ab) (Cyanobacteria bacterium Yellowstone A-Prime).